Consider the following 360-residue polypeptide: D-alanine--D-alanine ligase (360 aa).

One can recognise an ATP-grasp domain in the interval 146–352 (KLCVADAGIA…FPELAERLLQ (207 aa)). 179–234 (EEKFIYPFFVKPANLGSSIGISKVHHREQLPAALKSACSLDSKIVVEKAITGREIE) serves as a coordination point for ATP. Mg(2+) is bound by residues Asp-305, Glu-319, and Asn-321.

The protein belongs to the D-alanine--D-alanine ligase family. The cofactor is Mg(2+). Requires Mn(2+) as cofactor.

The protein localises to the cytoplasm. It catalyses the reaction 2 D-alanine + ATP = D-alanyl-D-alanine + ADP + phosphate + H(+). Its pathway is cell wall biogenesis; peptidoglycan biosynthesis. Cell wall formation. The chain is D-alanine--D-alanine ligase from Pelodictyon phaeoclathratiforme (strain DSM 5477 / BU-1).